We begin with the raw amino-acid sequence, 90 residues long: Serine-rich and transmembrane domain-containing 2 (90 aa).

N-linked (GlcNAc...) asparagine glycosylation occurs at asparagine 11. Residues 38-58 (YVGLFLSLLAILLILLFTMLL) traverse the membrane as a helical segment. The segment at 69–90 (SDSTESVPQFTDVEMQSRIPTP) is disordered.

The protein localises to the membrane. This is Serine-rich and transmembrane domain-containing 2 from Homo sapiens (Human).